We begin with the raw amino-acid sequence, 448 residues long: Rhodanese-like domain-containing protein 8, chloroplastic (448 aa).

A chloroplast-targeting transit peptide spans 1–23 (MRVSPAATLSVSLTTPLPITLTK). One can recognise a Rhodanese domain in the interval 220-323 (SGKSYILLDV…YLKEEGTAEW (104 aa)). The Cysteine persulfide intermediate role is filled by Cys-283.

The protein resides in the plastid. The protein localises to the chloroplast. This is Rhodanese-like domain-containing protein 8, chloroplastic (STR8) from Arabidopsis thaliana (Mouse-ear cress).